A 100-amino-acid polypeptide reads, in one-letter code: Small ribosomal subunit protein uS14c (100 aa).

It belongs to the universal ribosomal protein uS14 family. As to quaternary structure, part of the 30S ribosomal subunit.

The protein localises to the plastid. The protein resides in the chloroplast. Functionally, binds 16S rRNA, required for the assembly of 30S particles. The chain is Small ribosomal subunit protein uS14c from Chloranthus spicatus (Chulantree).